The following is a 337-amino-acid chain: Regulator of RpoS (337 aa).

A Response regulatory domain is found at 9–123 (QILIVEDEQV…NRLREMVFAC (115 aa)). A 4-aspartylphosphate modification is found at aspartate 58.

Belongs to the RssB family. Binds to RpoS. In terms of processing, phosphorylated. Phosphorylation stimulates the interaction with RpoS and, therefore, the proteolysis of RpoS.

Functionally, regulates the turnover of the sigma S factor (RpoS) by promoting its proteolysis in exponentially growing cells. Acts by binding and delivering RpoS to the ClpXP protease. RssB is not co-degraded with RpoS, but is released from the complex and can initiate a new cycle of RpoS recognition and degradation. This chain is Regulator of RpoS, found in Shigella flexneri.